Consider the following 148-residue polypeptide: UPF0179 protein Mevan_0979 (148 aa).

This sequence belongs to the UPF0179 family.

The sequence is that of UPF0179 protein Mevan_0979 from Methanococcus vannielii (strain ATCC 35089 / DSM 1224 / JCM 13029 / OCM 148 / SB).